The sequence spans 791 residues: Genome polyprotein (791 aa).

Residues 1 to 15 (MNNQRKKTGRPSFNM) form an interaction with host EXOC1 region. The Cytoplasmic segment spans residues 1–101 (MNNQRKKTGR…LNIMNRRKRS (101 aa)). Positions 37 to 72 (LLSGQGPMKLVMAFIAFLRFLAIPPTAGILARWSSF) are hydrophobic; homodimerization of capsid protein C. A propeptide spans 101–114 (SVTMLLMLLPTALA) (ER anchor for the capsid protein C, removed in mature form by serine protease NS3). A helical transmembrane segment spans residues 102–119 (VTMLLMLLPTALAFHLTT). The Extracellular portion of the chain corresponds to 120–242 (RGGEPTLIVS…QIQKVETWAL (123 aa)). A glycan (N-linked (GlcNAc...) asparagine; by host) is linked at N183. The helical transmembrane segment at 243–260 (RHPGFTVIGLFLAHAIGT) threads the bilayer. Residue S261 is a topological domain, cytoplasmic. The helical transmembrane segment at 262 to 280 (ITQKGIIFILLMLVTPSMA) threads the bilayer. Over 281–725 (MRCVGIGNRD…IHQIFGTAYG (445 aa)) the chain is Extracellular. 4 disulfides stabilise this stretch: C283-C310, C340-C401, C354-C385, and C372-C396. N347 is a glycosylation site (N-linked (GlcNAc...) asparagine; by host). The tract at residues 378 to 391 (DRGWGNGCGLFGKG) is fusion peptide. N433 is a glycosylation site (N-linked (GlcNAc...) asparagine; by host). 2 disulfide bridges follow: C465/C565 and C582/C613. A helical membrane pass occupies residues 726-746 (ILFSGVSWTMKIGIGILLTWL). Residues 747 to 752 (GLNSRS) lie on the Cytoplasmic side of the membrane. A helical membrane pass occupies residues 753–775 (TSLSMTCIAVGMVTLYLGVMVQA). The Extracellular segment spans residues 776–791 (DSGCVINWKGKELKCG). C779 and C790 are oxidised to a cystine.

In terms of assembly, homodimer. Interacts (via N-terminus) with host EXOC1 (via C-terminus); this interaction results in EXOC1 degradation through the proteasome degradation pathway. As to quaternary structure, forms heterodimers with envelope protein E in the endoplasmic reticulum and Golgi. Homodimer; in the endoplasmic reticulum and Golgi. Interacts with protein prM. Interacts with non-structural protein 1. In terms of assembly, homodimer; Homohexamer when secreted. Interacts with envelope protein E. Specific enzymatic cleavages in vivo yield mature proteins. Cleavages in the lumen of endoplasmic reticulum are performed by host signal peptidase, wereas cleavages in the cytoplasmic side are performed by serine protease NS3. Signal cleavage at the 2K-4B site requires a prior NS3 protease-mediated cleavage at the 4A-2K site. In terms of processing, N-glycosylated. Post-translationally, N-glycosylated. The excreted form is glycosylated and this is required for efficient secretion of the protein from infected cells.

The protein resides in the virion. The protein localises to the host nucleus. Its subcellular location is the host cytoplasm. It localises to the host perinuclear region. It is found in the secreted. The protein resides in the virion membrane. The protein localises to the host endoplasmic reticulum membrane. Functionally, plays a role in virus budding by binding to the cell membrane and gathering the viral RNA into a nucleocapsid that forms the core of a mature virus particle. During virus entry, may induce genome penetration into the host cytoplasm after hemifusion induced by the surface proteins. Can migrate to the cell nucleus where it modulates host functions. Overcomes the anti-viral effects of host EXOC1 by sequestering and degrading the latter through the proteasome degradation pathway. Its function is as follows. Inhibits RNA silencing by interfering with host Dicer. In terms of biological role, prevents premature fusion activity of envelope proteins in trans-Golgi by binding to envelope protein E at pH6.0. After virion release in extracellular space, gets dissociated from E dimers. Acts as a chaperone for envelope protein E during intracellular virion assembly by masking and inactivating envelope protein E fusion peptide. prM is the only viral peptide matured by host furin in the trans-Golgi network probably to avoid catastrophic activation of the viral fusion activity in acidic GolGi compartment prior to virion release. prM-E cleavage is inefficient, and many virions are only partially matured. These uncleaved prM would play a role in immune evasion. Functionally, may play a role in virus budding. Exerts cytotoxic effects by activating a mitochondrial apoptotic pathway through M ectodomain. May display a viroporin activity. Its function is as follows. Binds to host cell surface receptor and mediates fusion between viral and cellular membranes. Envelope protein is synthesized in the endoplasmic reticulum in the form of heterodimer with protein prM. They play a role in virion budding in the ER, and the newly formed immature particle is covered with 60 spikes composed of heterodimer between precursor prM and envelope protein E. The virion is transported to the Golgi apparatus where the low pH causes dissociation of PrM-E heterodimers and formation of E homodimers. prM-E cleavage is inefficient, and many virions are only partially matured. These uncleaved prM would play a role in immune evasion. In terms of biological role, involved in immune evasion, pathogenesis and viral replication. Once cleaved off the polyprotein, is targeted to three destinations: the viral replication cycle, the plasma membrane and the extracellular compartment. Essential for viral replication. Required for formation of the replication complex and recruitment of other non-structural proteins to the ER-derived membrane structures. Excreted as a hexameric lipoparticle that plays a role against host immune response. Antagonizing the complement function. Binds to the host macrophages and dendritic cells. Inhibits signal transduction originating from Toll-like receptor 3 (TLR3). Disrupts the host endothelial glycocalyx layer of host pulmonary microvascular endothelial cells, inducing degradation of sialic acid and shedding of heparan sulfate proteoglycans. NS1 induces expression of sialidases, heparanase, and activates cathepsin L, which activates heparanase via enzymatic cleavage. These effects are probably linked to the endothelial hyperpermeability observed in severe dengue disease. The chain is Genome polyprotein from Dengue virus type 1 (strain Jamaica/CV1636/1977) (DENV-1).